An 859-amino-acid chain; its full sequence is DNA mismatch repair protein MutS (859 aa).

G617–S624 serves as a coordination point for ATP. The disordered stretch occupies residues T801 to Q820.

This sequence belongs to the DNA mismatch repair MutS family.

Its function is as follows. This protein is involved in the repair of mismatches in DNA. It is possible that it carries out the mismatch recognition step. This protein has a weak ATPase activity. This is DNA mismatch repair protein MutS from Pseudomonas fluorescens (strain ATCC BAA-477 / NRRL B-23932 / Pf-5).